The sequence spans 41 residues: Hadrurin (41 aa).

This sequence belongs to the non-disulfide-bridged peptide (NDBP) superfamily. Long chain multifunctional peptide (group 2) family. In terms of tissue distribution, expressed by the venom gland.

Its subcellular location is the secreted. Antimicrobial activity against S.typhimurium, K.pneumoniae, E.cloacae, P.aeruginosa, E.coli and S.marcescens. Also shows hemolytic activity when tested in human erythrocytes. In Hoffmannihadrurus aztecus (Mexican scorpion), this protein is Hadrurin.